Consider the following 151-residue polypeptide: Deoxyuridine 5'-triphosphate nucleotidohydrolase (151 aa).

Substrate is bound by residues 70 to 72 (RSG), asparagine 83, 87 to 89 (LID), and methionine 97.

The protein belongs to the dUTPase family. It depends on Mg(2+) as a cofactor.

It carries out the reaction dUTP + H2O = dUMP + diphosphate + H(+). Its pathway is pyrimidine metabolism; dUMP biosynthesis; dUMP from dCTP (dUTP route): step 2/2. Its function is as follows. This enzyme is involved in nucleotide metabolism: it produces dUMP, the immediate precursor of thymidine nucleotides and it decreases the intracellular concentration of dUTP so that uracil cannot be incorporated into DNA. The chain is Deoxyuridine 5'-triphosphate nucleotidohydrolase from Pseudomonas aeruginosa (strain UCBPP-PA14).